A 427-amino-acid polypeptide reads, in one-letter code: 3-phosphoshikimate 1-carboxyvinyltransferase (427 aa).

3-phosphoshikimate is bound by residues K22, S23, and R27. Residue K22 participates in phosphoenolpyruvate binding. Phosphoenolpyruvate is bound by residues G96 and R124. S169, S170, Q171, S197, D313, N336, and K340 together coordinate 3-phosphoshikimate. Residue Q171 coordinates phosphoenolpyruvate. The active-site Proton acceptor is the D313. R344, R386, and K411 together coordinate phosphoenolpyruvate.

It belongs to the EPSP synthase family. In terms of assembly, monomer.

It localises to the cytoplasm. The catalysed reaction is 3-phosphoshikimate + phosphoenolpyruvate = 5-O-(1-carboxyvinyl)-3-phosphoshikimate + phosphate. Its pathway is metabolic intermediate biosynthesis; chorismate biosynthesis; chorismate from D-erythrose 4-phosphate and phosphoenolpyruvate: step 6/7. In terms of biological role, catalyzes the transfer of the enolpyruvyl moiety of phosphoenolpyruvate (PEP) to the 5-hydroxyl of shikimate-3-phosphate (S3P) to produce enolpyruvyl shikimate-3-phosphate and inorganic phosphate. This is 3-phosphoshikimate 1-carboxyvinyltransferase from Salmonella choleraesuis (strain SC-B67).